The primary structure comprises 574 residues: Squalene monooxygenase (574 aa).

The Cytoplasmic portion of the chain corresponds to 1 to 20 (MWTFLGIATFTYFYKKFGDF). Residues 1-100 (MWTFLGIATF…EQLEARRRRK (100 aa)) are interaction with MARCHF6. Residues 21–41 (ITLANREVLLCVLVFLSLGLV) lie within the membrane without spanning it. Residues 42–574 (LSYRCRHRNG…IYSEMKYMVH (533 aa)) are Cytoplasmic-facing. The segment at 62 to 73 (QFALFSDILSGL) is required for degradation in response to high membrane cholesterol levels. Residues 118-574 (TSSQNDPEVI…IYSEMKYMVH (457 aa)) form a sufficient for enzyme activity region. FAD is bound by residues 133–134 (VL), 153–154 (ER), R161, F166, R234, V250, D408, and M421. The segment at 516-574 (PLVLIGHFFAVAIYAVYFCFKSEPWITKPRALLSSGAVLYKACSVIFPLIYSEMKYMVH) is hydrophobic; mediates interaction with membranes.

The protein belongs to the squalene monooxygenase family. In terms of assembly, interacts (via N-terminal domain) with MARCHF6. Interacts with SMIM22; this interaction modulates lipid droplet formation. FAD serves as cofactor. Post-translationally, ubiquitinated by MARCHF6 in response to high cholesterol levels in intracellular membranes, leading to proteasomal degradation. Detected in liver (at protein level).

Its subcellular location is the microsome membrane. It is found in the endoplasmic reticulum membrane. The enzyme catalyses squalene + reduced [NADPH--hemoprotein reductase] + O2 = (S)-2,3-epoxysqualene + oxidized [NADPH--hemoprotein reductase] + H2O + H(+). Its pathway is terpene metabolism; lanosterol biosynthesis; lanosterol from farnesyl diphosphate: step 2/3. With respect to regulation, inhibited by NB-598 ((E)N-ethyl-N-(6,6-dimethyl-2-hepten-4-ynyl)-3-[(3,3'-bi-thiophen-5-yl)methoxy]benzene-methanamine). Contrary to fungal enzymes, the mammalian enzyme is only slightly inhibited by terbinafine. Inhibited by tellurite, tellurium dioxide, selenite, and selenium dioxide. Catalyzes the stereospecific oxidation of squalene to (S)-2,3-epoxysqualene, and is considered to be a rate-limiting enzyme in steroid biosynthesis. This is Squalene monooxygenase (SQLE) from Homo sapiens (Human).